A 227-amino-acid chain; its full sequence is Probable FKBP-type 25 kDa peptidyl-prolyl cis-trans isomerase (227 aa).

The PPIase FKBP-type domain maps to 144–227 (ATQVHVRYRG…VFEIDLLGFR (84 aa)).

It belongs to the FKBP-type PPIase family.

The enzyme catalyses [protein]-peptidylproline (omega=180) = [protein]-peptidylproline (omega=0). PPIases accelerate the folding of proteins. The sequence is that of Probable FKBP-type 25 kDa peptidyl-prolyl cis-trans isomerase (fkl) from Pseudomonas aeruginosa (strain ATCC 15692 / DSM 22644 / CIP 104116 / JCM 14847 / LMG 12228 / 1C / PRS 101 / PAO1).